Consider the following 210-residue polypeptide: HTH-type transcriptional repressor FabR (210 aa).

An HTH tetR-type domain is found at 10 to 70 (KTRRSLVEAA…TMVDESGLML (61 aa)). The segment at residues 33–52 (SLREVAREAGIAPTSFYRHF) is a DNA-binding region (H-T-H motif).

In terms of assembly, homodimer.

It localises to the cytoplasm. Its function is as follows. Represses the transcription of fabB, involved in unsaturated fatty acid (UFA) biosynthesis. By controlling UFA production, FabR directly influences the physical properties of the membrane bilayer. The polypeptide is HTH-type transcriptional repressor FabR (Klebsiella pneumoniae subsp. pneumoniae (strain ATCC 700721 / MGH 78578)).